The primary structure comprises 886 residues: DNA repair and recombination protein RAD54B (886 aa).

Positions 1 to 12 (MRRSAAPSQVQG) are enriched in polar residues. The tract at residues 1–95 (MRRSAAPSQV…ASKEITESKA (95 aa)) is disordered. Position 14 is a phosphoserine (Ser14). A compositionally biased stretch (polar residues) spans 47 to 62 (AEQSQNDPGVCSSNPC). 2 stretches are compositionally biased toward basic and acidic residues: residues 67–76 (IPREVGDGTR) and 86–95 (ASKEITESKA). The 168-residue stretch at 291–458 (GMRAVGKCGA…FALVDFVNPG (168 aa)) folds into the Helicase ATP-binding domain. Residue 304–311 (DEMGLGKT) participates in ATP binding. A DEGH box motif is present at residues 409-412 (DEGH). The region spanning 627-788 (KLLAVIHELR…HIQFSVEELK (162 aa)) is the Helicase C-terminal domain.

The protein belongs to the SNF2/RAD54 helicase family. Interacts with RAD51 through the NH2-terminal domain.

The protein resides in the nucleus. Functionally, involved in DNA repair and mitotic recombination. May play an active role in recombination processes in concert with other members of the RAD52 epistasis group. The chain is DNA repair and recombination protein RAD54B (Rad54b) from Mus musculus (Mouse).